We begin with the raw amino-acid sequence, 58 residues long: uncharacterized protein (58 aa).

This is an uncharacterized protein from Yersinia enterocolitica.